Here is an 883-residue protein sequence, read N- to C-terminus: Phosphoenolpyruvate carboxylase (883 aa).

Catalysis depends on residues His-138 and Lys-546.

It belongs to the PEPCase type 1 family. It depends on Mg(2+) as a cofactor.

It catalyses the reaction oxaloacetate + phosphate = phosphoenolpyruvate + hydrogencarbonate. Functionally, forms oxaloacetate, a four-carbon dicarboxylic acid source for the tricarboxylic acid cycle. This is Phosphoenolpyruvate carboxylase from Escherichia coli O81 (strain ED1a).